The sequence spans 93 residues: Alpha-defensin 13 (93 aa).

The first 19 residues, 1 to 19 (MKTLVLLSALVLLAFQVQA), serve as a signal peptide directing secretion. A propeptide spanning residues 20 to 58 (DPIQNTDEETKTEEQPGEEDQAVSVSFGDPEGTSLQEES) is cleaved from the precursor. A disordered region spans residues 22-54 (IQNTDEETKTEEQPGEEDQAVSVSFGDPEGTSL). 3 cysteine pairs are disulfide-bonded: C64-C92, C66-C81, and C71-C91.

It belongs to the alpha-defensin family. In terms of tissue distribution, paneth cells of the small bowel.

It is found in the secreted. Its function is as follows. Probably contributes to the antimicrobial barrier function of the small bowel mucosa. The sequence is that of Alpha-defensin 13 (Defa13) from Mus musculus (Mouse).